A 115-amino-acid polypeptide reads, in one-letter code: Large ribosomal subunit protein uL22 (115 aa).

It belongs to the universal ribosomal protein uL22 family. Part of the 50S ribosomal subunit.

Its function is as follows. This protein binds specifically to 23S rRNA; its binding is stimulated by other ribosomal proteins, e.g. L4, L17, and L20. It is important during the early stages of 50S assembly. It makes multiple contacts with different domains of the 23S rRNA in the assembled 50S subunit and ribosome. The globular domain of the protein is located near the polypeptide exit tunnel on the outside of the subunit, while an extended beta-hairpin is found that lines the wall of the exit tunnel in the center of the 70S ribosome. The chain is Large ribosomal subunit protein uL22 from Lactiplantibacillus plantarum (strain ATCC BAA-793 / NCIMB 8826 / WCFS1) (Lactobacillus plantarum).